A 491-amino-acid chain; its full sequence is Glutamyl-tRNA(Gln) amidotransferase subunit A (491 aa).

Residues lysine 77 and serine 152 each act as charge relay system in the active site. Residue serine 176 is the Acyl-ester intermediate of the active site.

Belongs to the amidase family. GatA subfamily. In terms of assembly, heterotrimer of A, B and C subunits.

The catalysed reaction is L-glutamyl-tRNA(Gln) + L-glutamine + ATP + H2O = L-glutaminyl-tRNA(Gln) + L-glutamate + ADP + phosphate + H(+). In terms of biological role, allows the formation of correctly charged Gln-tRNA(Gln) through the transamidation of misacylated Glu-tRNA(Gln) in organisms which lack glutaminyl-tRNA synthetase. The reaction takes place in the presence of glutamine and ATP through an activated gamma-phospho-Glu-tRNA(Gln). The sequence is that of Glutamyl-tRNA(Gln) amidotransferase subunit A from Chlamydia trachomatis serovar L2 (strain ATCC VR-902B / DSM 19102 / 434/Bu).